The chain runs to 102 residues: Anti-lipopolysaccharide factor (102 aa).

Residues cysteine 32 and cysteine 53 are joined by a disulfide bond.

In terms of biological role, binds tightly to LPS and thus specifically inhibits the LPS-mediated activation of the hemolymph coagulation. It has a strong antibacterial effect especially on the growth of Gram-negative bacteria. The chain is Anti-lipopolysaccharide factor from Tachypleus tridentatus (Japanese horseshoe crab).